The sequence spans 147 residues: Phospholipase A2 inhibitor subunit B (147 aa).

The C-type lectin domain maps to 62–143 (EICEEAGGHI…DEKLLVVCEF (82 aa)). Intrachain disulfides connect Cys-64-Cys-141 and Cys-119-Cys-133. Residue Asn-103 is glycosylated (N-linked (GlcNAc...) asparagine).

Belongs to the alpha-type phospholipase A2 inhibitor family. In terms of assembly, homo- or heterotrimer; homotrimer of PLI-A chains, two PLI-A and one PLI-B chains, one PLI-A and two PLI-B chains, and homotrimer of PLI-B chains (with a ratio of 1:3:3:1). As to expression, expressed by the liver.

It localises to the secreted. Its function is as follows. PLI binds directly phospholipase A2 in the presence or absence of calcium. Inhibitory activity of the PLI-B homotrimer is less specific than that of the PLI-A homotrimer. The protein is Phospholipase A2 inhibitor subunit B of Protobothrops flavoviridis (Habu).